A 201-amino-acid chain; its full sequence is ATP-dependent Clp protease proteolytic subunit (201 aa).

Serine 101 (nucleophile) is an active-site residue. Histidine 126 is an active-site residue.

Belongs to the peptidase S14 family. Component of the chloroplastic Clp protease core complex.

The protein localises to the plastid. Its subcellular location is the chloroplast stroma. The catalysed reaction is Hydrolysis of proteins to small peptides in the presence of ATP and magnesium. alpha-casein is the usual test substrate. In the absence of ATP, only oligopeptides shorter than five residues are hydrolyzed (such as succinyl-Leu-Tyr-|-NHMec, and Leu-Tyr-Leu-|-Tyr-Trp, in which cleavage of the -Tyr-|-Leu- and -Tyr-|-Trp bonds also occurs).. Cleaves peptides in various proteins in a process that requires ATP hydrolysis. Has a chymotrypsin-like activity. Plays a major role in the degradation of misfolded proteins. The polypeptide is ATP-dependent Clp protease proteolytic subunit (Staurastrum punctulatum (Green alga)).